We begin with the raw amino-acid sequence, 418 residues long: MLERETMSDQNRLVLAYSGGLDTSVAISYLKERTGKDVVAVSLDVGQGGESLETIKQRALACGAVEAYVVDARDEFANEYCMKALKANAMYEGVYPLVSAISRPLISKHLVRAAHQFGADTISHGCTGKGNDQVRFEVSIASIDPTLKAISPIRDLSLTRDVEIAFAKEHKLPIVQTEKSPFSIDQNVWGRAIETGFLEDPWNGPTKDCYSYTDDPAFPPVEDEVVIEFKQGVPVKIDGHDVTPLQAIEEMNRRAGAQGIGRIDLIEDRLVGIKSRELYEAPGAVALITAHQELENCCLEREQHRIKRDIDKRWAELVYDAQWFSPATQSLNAFIEDTQKYVSGEIRMVLHGGRAVVTGRRSDSSLYDYNLATYDSGDSFDQKSSNGFIDIYGLPSRVAAARDVKFGNGIEVPENSVE.

16-24 (AYSGGLDTS) serves as a coordination point for ATP. Tyr95 contributes to the L-citrulline binding site. Gly125 provides a ligand contact to ATP. Residues Thr127, Asn131, and Asp132 each coordinate L-aspartate. Asn131 is an L-citrulline binding site. L-citrulline-binding residues include Arg135, Ser183, Glu267, and Tyr279.

It belongs to the argininosuccinate synthase family. Type 1 subfamily. In terms of assembly, homotetramer.

The protein resides in the cytoplasm. The catalysed reaction is L-citrulline + L-aspartate + ATP = 2-(N(omega)-L-arginino)succinate + AMP + diphosphate + H(+). It participates in amino-acid biosynthesis; L-arginine biosynthesis; L-arginine from L-ornithine and carbamoyl phosphate: step 2/3. The polypeptide is Argininosuccinate synthase (Bifidobacterium adolescentis (strain ATCC 15703 / DSM 20083 / NCTC 11814 / E194a)).